The following is a 197-amino-acid chain: Phosphoheptose isomerase (197 aa).

Residues 34–196 (MVQCLLGGNK…DRTLFPQDDQ (163 aa)) enclose the SIS domain. Residue 49-51 (NGG) participates in substrate binding. 2 residues coordinate Zn(2+): H58 and E62. Substrate-binding positions include E62, 91–92 (ND), 117–119 (STS), S122, and Q172. Zn(2+) is bound by residues Q172 and H180.

The protein belongs to the SIS family. GmhA subfamily. In terms of assembly, homotetramer. The cofactor is Zn(2+).

It is found in the cytoplasm. The catalysed reaction is 2 D-sedoheptulose 7-phosphate = D-glycero-alpha-D-manno-heptose 7-phosphate + D-glycero-beta-D-manno-heptose 7-phosphate. The protein operates within carbohydrate biosynthesis; D-glycero-D-manno-heptose 7-phosphate biosynthesis; D-glycero-alpha-D-manno-heptose 7-phosphate and D-glycero-beta-D-manno-heptose 7-phosphate from sedoheptulose 7-phosphate: step 1/1. Catalyzes the isomerization of sedoheptulose 7-phosphate in D-glycero-D-manno-heptose 7-phosphate. This chain is Phosphoheptose isomerase, found in Shewanella loihica (strain ATCC BAA-1088 / PV-4).